The primary structure comprises 185 residues: Urease accessory protein UreE (185 aa).

The tract at residues 153-185 is disordered; sequence LRANSAQGHGHSHSHSHDHHGYHHHGDGHWHKH. Over residues 162-175 the composition is skewed to basic residues; it reads GHSHSHSHDHHGYH. Positions 176–185 are enriched in basic and acidic residues; it reads HHGDGHWHKH.

This sequence belongs to the UreE family.

It is found in the cytoplasm. Involved in urease metallocenter assembly. Binds nickel. Probably functions as a nickel donor during metallocenter assembly. This chain is Urease accessory protein UreE, found in Haemophilus influenzae (strain PittEE).